Here is a 130-residue protein sequence, read N- to C-terminus: Protein ApaG (130 aa).

An ApaG domain is found at 3–127; the sequence is SEVTRSIRVT…FSLDSPHGRS (125 aa).

The polypeptide is Protein ApaG (Rhodospirillum centenum (strain ATCC 51521 / SW)).